A 124-amino-acid chain; its full sequence is Small ribosomal subunit protein bS6 (124 aa).

The segment covering 105–115 (EVQHEEARKSA) has biased composition (basic and acidic residues). The interval 105 to 124 (EVQHEEARKSAQSDAPVAAA) is disordered.

It belongs to the bacterial ribosomal protein bS6 family.

In terms of biological role, binds together with bS18 to 16S ribosomal RNA. This Polynucleobacter necessarius subsp. necessarius (strain STIR1) protein is Small ribosomal subunit protein bS6.